Here is a 97-residue protein sequence, read N- to C-terminus: Co-chaperonin GroES (97 aa).

This sequence belongs to the GroES chaperonin family. In terms of assembly, heptamer of 7 subunits arranged in a ring. Interacts with the chaperonin GroEL.

It localises to the cytoplasm. In terms of biological role, together with the chaperonin GroEL, plays an essential role in assisting protein folding. The GroEL-GroES system forms a nano-cage that allows encapsulation of the non-native substrate proteins and provides a physical environment optimized to promote and accelerate protein folding. GroES binds to the apical surface of the GroEL ring, thereby capping the opening of the GroEL channel. The chain is Co-chaperonin GroES from Stutzerimonas stutzeri (Pseudomonas stutzeri).